A 536-amino-acid polypeptide reads, in one-letter code: Keratin, type II cytoskeletal 4 (536 aa).

Positions Met1 to Ala145 are head. Residue Arg13 is modified to Omega-N-methylarginine. Residues Glu146–Leu181 form a coil 1A region. An IF rod domain is found at Glu146–Met457. The tract at residues Gln182–Tyr200 is linker 1. The segment at Ile201–Gln293 is coil 1B. Residues Thr294–Ile316 are linker 12. Positions Ile317–Glu454 are coil 2. The segment at Cys455–Ser524 is tail. The segment at Thr515–Pro536 is disordered. Over residues Thr527 to Pro536 the composition is skewed to basic and acidic residues.

The protein belongs to the intermediate filament family. As to quaternary structure, heterotetramer of two type I and two type II keratins. keratin-4 is generally associated with keratin-13.

This is Keratin, type II cytoskeletal 4 from Rattus norvegicus (Rat).